The chain runs to 226 residues: uncharacterized protein (226 aa).

A run of 4 helical transmembrane segments spans residues 25 to 45 (ALAWLCDVFLLAIVLVVIFLI), 54 to 74 (FLLFLVLSCSQTILWTVYFIF), 107 to 127 (ELFLWILLSVLFLVIASYFFI), and 153 to 173 (TITILISFLQLIFIGYFCFSS).

It is found in the cell membrane. This is an uncharacterized protein from Mycoplasma genitalium (strain ATCC 33530 / DSM 19775 / NCTC 10195 / G37) (Mycoplasmoides genitalium).